The sequence spans 728 residues: Double-strand break repair protein mre-11 (728 aa).

Acidic residues predominate over residues 1-12 (MCGSDDSFDDFV). Residues 1 to 45 (MCGSDDSFDDFVPDSQEPASSRTRNQDHLDDDEVPCSQRPDAAND) form a disordered region. Mn(2+) is bound by residues Asp73, His75, Asp113, and Asn181. Catalysis depends on His182, which acts as the Proton donor. His269, His301, and His303 together coordinate Mn(2+). The tract at residues 601–728 (KNPVADVEME…PSKKRDLSFF (128 aa)) is disordered. Residues 607-616 (VEMEEDEDDP) are compositionally biased toward acidic residues. Residues 622–632 (PQSTSRTNYAS) are compositionally biased toward polar residues. Over residues 634 to 645 (SEDEVANSDEEM) the composition is skewed to acidic residues.

This sequence belongs to the MRE11/RAD32 family. In terms of assembly, component of the MRN complex composed of two heterodimers rad-50 and mre-11 associated with a single nbs-1. Mn(2+) serves as cofactor.

The protein resides in the nucleus. The protein localises to the chromosome. Its function is as follows. Core component of the MRN complex, which plays a central role in double-strand break (DSB) repair, DNA recombination, maintenance of telomere integrity and meiosis. The MRN complex is involved in the repair of DNA double-strand breaks (DSBs) via homologous recombination (HR), an error-free mechanism which primarily occurs during S and G2 phases. The complex (1) mediates the end resection of damaged DNA, which generates proper single-stranded DNA, a key initial steps in HR, and is (2) required for the recruitment of other repair factors and efficient activation of ATM and ATR upon DNA damage. Within the MRN complex, mre-11 possesses both single-strand endonuclease activity and double-strand-specific 3'-5' exonuclease activity. Mre-11 first endonucleolytically cleaves the 5' strand at DNA DSB ends to prevent non-homologous end joining (NHEJ) and licence HR. It then generates a single-stranded DNA gap via 3' to 5' exonucleolytic degradation, which is required for single-strand invasion and recombination. Required for meiotic crossing over and chiasma formation. Pachytene morphology and homolog pairing are normal. Vital in long term for maintenance of reproductive capacity of subsequent generations. The protein is Double-strand break repair protein mre-11 of Caenorhabditis elegans.